A 146-amino-acid polypeptide reads, in one-letter code: Large ribosomal subunit protein uL15 (146 aa).

The segment at 1–45 (MTIKLHHLRPAPGSKTERTRVGRGEGSKGKTAGRGTKGTKARKNV) is disordered. Residues 15 to 28 (KTERTRVGRGEGSK) show a composition bias toward basic and acidic residues.

This sequence belongs to the universal ribosomal protein uL15 family. In terms of assembly, part of the 50S ribosomal subunit.

Its function is as follows. Binds to the 23S rRNA. The polypeptide is Large ribosomal subunit protein uL15 (Mycobacteroides abscessus (strain ATCC 19977 / DSM 44196 / CCUG 20993 / CIP 104536 / JCM 13569 / NCTC 13031 / TMC 1543 / L948) (Mycobacterium abscessus)).